Consider the following 459-residue polypeptide: Exodeoxyribonuclease 7 large subunit (459 aa).

This sequence belongs to the XseA family. In terms of assembly, heterooligomer composed of large and small subunits.

The protein resides in the cytoplasm. The enzyme catalyses Exonucleolytic cleavage in either 5'- to 3'- or 3'- to 5'-direction to yield nucleoside 5'-phosphates.. In terms of biological role, bidirectionally degrades single-stranded DNA into large acid-insoluble oligonucleotides, which are then degraded further into small acid-soluble oligonucleotides. The sequence is that of Exodeoxyribonuclease 7 large subunit from Pseudomonas fluorescens (strain SBW25).